The sequence spans 196 residues: DnaA initiator-associating protein DiaA (196 aa).

In terms of domain architecture, SIS spans M34–D196.

Belongs to the SIS family. DiaA subfamily. Homotetramer; dimer of dimers.

Functionally, required for the timely initiation of chromosomal replication via direct interactions with the DnaA initiator protein. The chain is DnaA initiator-associating protein DiaA from Pectobacterium atrosepticum (strain SCRI 1043 / ATCC BAA-672) (Erwinia carotovora subsp. atroseptica).